The sequence spans 162 residues: ATP synthase subunit b (162 aa).

The chain crosses the membrane as a helical span at residues 2–22 (LEFNATLLAQIVDFIILLIFL).

The protein belongs to the ATPase B chain family. As to quaternary structure, F-type ATPases have 2 components, F(1) - the catalytic core - and F(0) - the membrane proton channel. F(1) has five subunits: alpha(3), beta(3), gamma(1), delta(1), epsilon(1). F(0) has three main subunits: a(1), b(2) and c(10-14). The alpha and beta chains form an alternating ring which encloses part of the gamma chain. F(1) is attached to F(0) by a central stalk formed by the gamma and epsilon chains, while a peripheral stalk is formed by the delta and b chains.

The protein resides in the cell membrane. Its function is as follows. F(1)F(0) ATP synthase produces ATP from ADP in the presence of a proton or sodium gradient. F-type ATPases consist of two structural domains, F(1) containing the extramembraneous catalytic core and F(0) containing the membrane proton channel, linked together by a central stalk and a peripheral stalk. During catalysis, ATP synthesis in the catalytic domain of F(1) is coupled via a rotary mechanism of the central stalk subunits to proton translocation. Component of the F(0) channel, it forms part of the peripheral stalk, linking F(1) to F(0). This Pelotomaculum thermopropionicum (strain DSM 13744 / JCM 10971 / SI) protein is ATP synthase subunit b.